The chain runs to 118 residues: Non-specific lipid-transfer protein A (118 aa).

The signal sequence occupies residues 1-25 (MAGVMKLACLVLACMIVAGPITANR). Intrachain disulfides connect cysteine 29–cysteine 76, cysteine 39–cysteine 53, cysteine 54–cysteine 100, and cysteine 74–cysteine 114.

The protein belongs to the plant LTP family.

In terms of biological role, plant non-specific lipid-transfer proteins transfer phospholipids as well as galactolipids across membranes. May play a role in wax or cutin deposition in the cell walls of expanding epidermal cells and certain secretory tissues. The protein is Non-specific lipid-transfer protein A (WAX9A) of Brassica oleracea var. italica (Broccoli).